Reading from the N-terminus, the 358-residue chain is MQSYNVAVLAGDGIGPEVMAEAMKVLNKVQEKFGFKLNFNEFFVGGAAIDHCGYPLPAETLKGCDEADAILFGSVGGPKWTNLPPDQQPERGALLPLRKHFKLFCNLRPATLYKGLEKFCPLRADIAAKGFDMVVVRELTGGIYFGQPKGREGEGSQTKAFDTEVYYKYEIERIARAAFEAAMKRNKKVTSVDKANVLQSSILWRETVTEMAKDYPEVTLEHIYIDNATMQLIKAPESFDVLLCSNIFGDIISDEAAMITGSMGMLPSASLNEAGFGLYEPAGGSAPDIAGKGIANPIAQILSAAMMLRYSFNLNEAADAIESAVQKVLASGHRTADLADDSTPVSTAEMGTLITQAI.

An NAD(+)-binding site is contributed by 77–90 (GPKWTNLPPDQQPE). Residues Arg-98, Arg-108, Arg-137, and Asp-226 each contribute to the substrate site. Mg(2+) is bound by residues Asp-226, Asp-250, and Asp-254. NAD(+) is bound at residue 284-296 (GSAPDIAGKGIAN).

The protein belongs to the isocitrate and isopropylmalate dehydrogenases family. LeuB type 1 subfamily. Homodimer. Mg(2+) serves as cofactor. The cofactor is Mn(2+).

The protein localises to the cytoplasm. It carries out the reaction (2R,3S)-3-isopropylmalate + NAD(+) = 4-methyl-2-oxopentanoate + CO2 + NADH. Its pathway is amino-acid biosynthesis; L-leucine biosynthesis; L-leucine from 3-methyl-2-oxobutanoate: step 3/4. Catalyzes the oxidation of 3-carboxy-2-hydroxy-4-methylpentanoate (3-isopropylmalate) to 3-carboxy-4-methyl-2-oxopentanoate. The product decarboxylates to 4-methyl-2 oxopentanoate. This chain is 3-isopropylmalate dehydrogenase, found in Haemophilus influenzae (strain 86-028NP).